A 433-amino-acid polypeptide reads, in one-letter code: Homoserine dehydrogenase (433 aa).

Positions 12, 13, and 102 each coordinate NADPH. Residue Val-13 participates in NAD(+) binding. NADP(+) contacts are provided by Val-13 and Lys-102. Glu-126, Val-129, Gly-131, and Ile-133 together coordinate Na(+). NADP(+) is bound by residues Gly-184 and Glu-187. L-homoserine is bound by residues Glu-187 and Asp-198. The Proton donor role is filled by Lys-202. Gly-303 serves as a coordination point for NADPH. An NAD(+)-binding site is contributed by Gly-303. Gly-303 is a binding site for NADP(+). One can recognise an ACT domain in the interval 356–433 (YCRFLCADVP…EIPSVIRVLS (78 aa)).

This sequence belongs to the homoserine dehydrogenase family. A metal cation is required as a cofactor.

It catalyses the reaction L-homoserine + NADP(+) = L-aspartate 4-semialdehyde + NADPH + H(+). The catalysed reaction is L-homoserine + NAD(+) = L-aspartate 4-semialdehyde + NADH + H(+). The protein operates within amino-acid biosynthesis; L-methionine biosynthesis via de novo pathway; L-homoserine from L-aspartate: step 3/3. It functions in the pathway amino-acid biosynthesis; L-threonine biosynthesis; L-threonine from L-aspartate: step 3/5. In terms of biological role, catalyzes the conversion of L-aspartate-beta-semialdehyde (L-Asa) to L-homoserine (L-Hse), the third step in the biosynthesis of threonine and methionine from aspartate. This chain is Homoserine dehydrogenase (hom), found in Synechocystis sp. (strain ATCC 27184 / PCC 6803 / Kazusa).